The sequence spans 253 residues: 5'/3'-nucleotidase SurE (253 aa).

Residues Asp8, Asp9, Ser39, and Asn92 each contribute to the a divalent metal cation site.

This sequence belongs to the SurE nucleotidase family. A divalent metal cation is required as a cofactor.

Its subcellular location is the cytoplasm. It carries out the reaction a ribonucleoside 5'-phosphate + H2O = a ribonucleoside + phosphate. It catalyses the reaction a ribonucleoside 3'-phosphate + H2O = a ribonucleoside + phosphate. The enzyme catalyses [phosphate](n) + H2O = [phosphate](n-1) + phosphate + H(+). Functionally, nucleotidase with a broad substrate specificity as it can dephosphorylate various ribo- and deoxyribonucleoside 5'-monophosphates and ribonucleoside 3'-monophosphates with highest affinity to 3'-AMP. Also hydrolyzes polyphosphate (exopolyphosphatase activity) with the preference for short-chain-length substrates (P20-25). Might be involved in the regulation of dNTP and NTP pools, and in the turnover of 3'-mononucleotides produced by numerous intracellular RNases (T1, T2, and F) during the degradation of various RNAs. This is 5'/3'-nucleotidase SurE from Salmonella arizonae (strain ATCC BAA-731 / CDC346-86 / RSK2980).